A 210-amino-acid chain; its full sequence is Ribosomal RNA small subunit methyltransferase G (210 aa).

S-adenosyl-L-methionine is bound by residues G77, F82, 100–102, 128–129, and R141; these read ERS and VE.

Belongs to the methyltransferase superfamily. RNA methyltransferase RsmG family.

Its subcellular location is the cytoplasm. Specifically methylates the N7 position of a guanine in 16S rRNA. This chain is Ribosomal RNA small subunit methyltransferase G, found in Borrelia duttonii (strain Ly).